Here is a 547-residue protein sequence, read N- to C-terminus: Chaperonin GroEL 2 (547 aa).

ATP contacts are provided by residues 30–33 (TLGP), lysine 51, 87–91 (DGTTT), glycine 415, 479–481 (NAA), and aspartate 495. Residues 525 to 547 (PKEESAAPAGGGMGGMGGMGGMM) form a disordered region. Gly residues predominate over residues 533–547 (AGGGMGGMGGMGGMM).

It belongs to the chaperonin (HSP60) family. As to quaternary structure, forms a cylinder of 14 subunits composed of two heptameric rings stacked back-to-back. Interacts with the co-chaperonin GroES.

The protein localises to the cytoplasm. It catalyses the reaction ATP + H2O + a folded polypeptide = ADP + phosphate + an unfolded polypeptide.. Together with its co-chaperonin GroES, plays an essential role in assisting protein folding. The GroEL-GroES system forms a nano-cage that allows encapsulation of the non-native substrate proteins and provides a physical environment optimized to promote and accelerate protein folding. The sequence is that of Chaperonin GroEL 2 from Anaeromyxobacter dehalogenans (strain 2CP-C).